The following is a 474-amino-acid chain: Cyclin-dependent kinase 2 homolog (474 aa).

In terms of domain architecture, Protein kinase spans 7–446 (YRHVVKLGEG…AAEAVHHPYL (440 aa)). ATP-binding positions include 13–21 (LGEGTYGMV) and Lys36. The residue at position 17 (Thr17) is a Phosphothreonine. Tyr18 carries the phosphotyrosine modification. Residue Asp131 is the Proton acceptor of the active site. Residues 150-200 (TALPSSPQQSMRVPHAGGTNGEAGRASANGNEHAPRPTAAEGSVSPWEEAA) are disordered. Ser230 carries the post-translational modification Phosphoserine. Over residues 334–354 (QQLQAQQQQPQQGSSPSHSSS) the composition is skewed to low complexity. The interval 334–356 (QQLQAQQQQPQQGSSPSHSSSRA) is disordered.

Belongs to the protein kinase superfamily. CMGC Ser/Thr protein kinase family. CDC2/CDKX subfamily. May form a complex composed of at least the catalytic subunit CRK2 and a cyclin. Requires Mg(2+) as cofactor.

It is found in the cytoplasm. It carries out the reaction L-seryl-[protein] + ATP = O-phospho-L-seryl-[protein] + ADP + H(+). The enzyme catalyses L-threonyl-[protein] + ATP = O-phospho-L-threonyl-[protein] + ADP + H(+). It catalyses the reaction [DNA-directed RNA polymerase] + ATP = phospho-[DNA-directed RNA polymerase] + ADP + H(+). Phosphorylation at Thr-17 or Tyr-18 inactivates the enzyme, while phosphorylation at Ser-230 activates it. In terms of biological role, serine/threonine-protein kinase. Involved in the control of the cell cycle. Required for entry into S-phase and mitosis. Probable component of the kinase complex that phosphorylates the repetitive C-terminus of RNA polymerase II. This Crithidia fasciculata protein is Cyclin-dependent kinase 2 homolog.